The sequence spans 601 residues: Glutamine--fructose-6-phosphate aminotransferase [isomerizing] (601 aa).

The active-site Nucleophile; for GATase activity is C2. In terms of domain architecture, Glutamine amidotransferase type-2 spans 2–218 (CGIVGYIGYD…DHEIVIVKKD (217 aa)). SIS domains are found at residues 284–423 (IIND…EHGR) and 453–591 (IATD…VDKP). The active-site For Fru-6P isomerization activity is the K596.

Homodimer.

It localises to the cytoplasm. It catalyses the reaction D-fructose 6-phosphate + L-glutamine = D-glucosamine 6-phosphate + L-glutamate. Catalyzes the first step in hexosamine metabolism, converting fructose-6P into glucosamine-6P using glutamine as a nitrogen source. The sequence is that of Glutamine--fructose-6-phosphate aminotransferase [isomerizing] from Staphylococcus aureus (strain Mu50 / ATCC 700699).